A 414-amino-acid chain; its full sequence is CinA-like protein (414 aa).

It belongs to the CinA family.

The chain is CinA-like protein from Citrifermentans bemidjiense (strain ATCC BAA-1014 / DSM 16622 / JCM 12645 / Bem) (Geobacter bemidjiensis).